Consider the following 100-residue polypeptide: Urease subunit gamma (100 aa).

The protein belongs to the urease gamma subunit family. As to quaternary structure, heterotrimer of UreA (gamma), UreB (beta) and UreC (alpha) subunits. Three heterotrimers associate to form the active enzyme.

The protein localises to the cytoplasm. It catalyses the reaction urea + 2 H2O + H(+) = hydrogencarbonate + 2 NH4(+). It participates in nitrogen metabolism; urea degradation; CO(2) and NH(3) from urea (urease route): step 1/1. The chain is Urease subunit gamma from Micrococcus luteus (strain ATCC 4698 / DSM 20030 / JCM 1464 / CCM 169 / CCUG 5858 / IAM 1056 / NBRC 3333 / NCIMB 9278 / NCTC 2665 / VKM Ac-2230) (Micrococcus lysodeikticus).